The chain runs to 238 residues: Probable transcriptional regulatory protein SZO_02930 (238 aa).

It belongs to the TACO1 family. YeeN subfamily.

It localises to the cytoplasm. This is Probable transcriptional regulatory protein SZO_02930 from Streptococcus equi subsp. zooepidemicus (strain H70).